A 130-amino-acid polypeptide reads, in one-letter code: Interferon alpha-inducible protein 27-like protein 2 (130 aa).

3 consecutive transmembrane segments (helical) span residues 8–28, 43–63, and 66–86; these read AAVG…AMGF, MSAA…VATL, and VGAA…GSVL. A disordered region spans residues 93 to 130; that stretch reads SPSSSLPAEPEAKEDEARENVPQGEPPKPPLKSEKHEE.

It belongs to the IFI6/IFI27 family.

The protein localises to the mitochondrion membrane. Functionally, plays a role in the apoptotic process and has a pro-apoptotic activity. The sequence is that of Interferon alpha-inducible protein 27-like protein 2 from Homo sapiens (Human).